A 196-amino-acid chain; its full sequence is DnaA initiator-associating protein DiaA (196 aa).

One can recognise an SIS domain in the interval 34-196 (LVQSLLNGNK…DNTLFPHQDD (163 aa)).

Belongs to the SIS family. DiaA subfamily. In terms of assembly, homotetramer; dimer of dimers.

Functionally, required for the timely initiation of chromosomal replication via direct interactions with the DnaA initiator protein. This Cronobacter sakazakii (strain ATCC BAA-894) (Enterobacter sakazakii) protein is DnaA initiator-associating protein DiaA.